We begin with the raw amino-acid sequence, 329 residues long: Trem-like transcript 2 protein (329 aa).

A signal peptide spans 1–24; the sequence is MEPWPLTFLLLLLLLLWLQGCVSG. The region spanning 25 to 126 is the Ig-like V-type domain; that stretch reads HSNENLYRKV…HFYPLVGFQL (102 aa). Residues 25–270 lie on the Extracellular side of the membrane; that stretch reads HSNENLYRKV…NRSQETYIPA (246 aa). Cystine bridges form between C46–C110 and C61–C68. A disordered region spans residues 202-259; sequence FIDTSGTVTEPERNTESQPATLSPSNARSFSADPVTTSTMSRHQSSSLSTTGTCHPLT. Residues 217–259 are compositionally biased toward polar residues; sequence ESQPATLSPSNARSFSADPVTTSTMSRHQSSSLSTTGTCHPLT. N-linked (GlcNAc...) asparagine glycosylation occurs at N261. A helical transmembrane segment spans residues 271-291; that stretch reads MVVVLTFLPAPVVLVVAYGFW. Residues 292 to 329 are Cytoplasmic-facing; it reads KKRHMGRYNLGSNYAKPWIHLPEGPETPWKPAWSKITQ.

Interacts with CD276 and this interaction enhances T-cell activation. As to expression, detected in B-lymphocytes and macrophages. Detected in spleen, lymph nodes, blood, bone marrow and cells from the peritoneal cavity (at protein level).

The protein localises to the cell membrane. In terms of biological role, cell surface receptor that may play a role in the innate and adaptive immune response. Acts as a counter-receptor for CD276 and interaction with CD276 on T-cells enhances T-cell activation. This Mus musculus (Mouse) protein is Trem-like transcript 2 protein (Treml2).